Reading from the N-terminus, the 248-residue chain is NADP-dependent 3-hydroxy acid dehydrogenase YdfG (248 aa).

NADP(+) is bound by residues 7 to 12 (GATAGF), 32 to 33 (RR), 54 to 55 (DV), and Asn-81. Ser-134 provides a ligand contact to substrate. Residues Tyr-147, Lys-151, and 177–185 (PGLVGGTEF) contribute to the NADP(+) site. Residue Tyr-147 is the Proton acceptor of the active site.

It belongs to the short-chain dehydrogenases/reductases (SDR) family. As to quaternary structure, homotetramer.

It catalyses the reaction 3-hydroxypropanoate + NADP(+) = 3-oxopropanoate + NADPH + H(+). It carries out the reaction L-allo-threonine + NADP(+) = aminoacetone + CO2 + NADPH. NADP-dependent dehydrogenase with broad substrate specificity acting on 3-hydroxy acids. Catalyzes the NADP-dependent oxidation of L-allo-threonine to L-2-amino-3-keto-butyrate, which is spontaneously decarboxylated into aminoacetone. Also acts on D-threonine, L-serine, D-serine, D-3-hydroxyisobutyrate, L-3-hydroxyisobutyrate, D-glycerate and L-glycerate. Able to catalyze the reduction of the malonic semialdehyde to 3-hydroxypropionic acid. YdfG is apparently supplementing RutE, the presumed malonic semialdehyde reductase involved in pyrimidine degradation since both are able to detoxify malonic semialdehyde. In Escherichia coli O157:H7, this protein is NADP-dependent 3-hydroxy acid dehydrogenase YdfG.